The primary structure comprises 578 residues: Transmembrane protein 121B (578 aa).

2 disordered regions span residues 1-84 (MRPA…ESLS) and 106-129 (AGPA…PTSS). Composition is skewed to low complexity over residues 8–17 (PRSVSSASGS) and 44–53 (GDSSTSTSTS). The segment covering 54 to 67 (RGGGGGRRGGGGGS) has biased composition (gly residues). Phosphoserine is present on Ser-167. Positions 529–557 (RARGGYGAPPSAPPPPPPPPQGGSQLGHC) are disordered. The segment covering 538-549 (PSAPPPPPPPPQ) has biased composition (pro residues). At Ser-552 the chain carries Phosphoserine.

It belongs to the TMEM121 family. As to expression, widely expressed, especially in adult heart, brain, prostate, testes, peripherical blood leukocytes and fetal brain.

This Homo sapiens (Human) protein is Transmembrane protein 121B.